The sequence spans 546 residues: Cryptochrome DASH, chloroplastic/mitochondrial (546 aa).

The Photolyase/cryptochrome alpha/beta domain maps to 4 to 151; the sequence is TRVVIWFRND…TMERHWGSTL (148 aa). Residues 497-546 form a disordered region; sequence PRRDFTEMGSPPGPRRGGGGGGRGRGRPGGSTPNRGTKARVASVYDTVYG. Over residues 511–525 the composition is skewed to gly residues; that stretch reads RRGGGGGGRGRGRPG.

This sequence belongs to the DNA photolyase class-1 family. Requires FAD as cofactor. (6R)-5,10-methylene-5,6,7,8-tetrahydrofolate is required as a cofactor.

The protein resides in the plastid. It localises to the chloroplast. It is found in the mitochondrion. May have a photoreceptor function. Binds ss- and ds-DNA in a sequence non-specific manner, lacks photolyase activity. This Ostreococcus tauri protein is Cryptochrome DASH, chloroplastic/mitochondrial.